The primary structure comprises 265 residues: MVLYFIGLGLYDERDITVKGLEIAKKCDYVFAEFYTSLMAGTTLGRIQKLIGKEIRVLSREDVELNFENIVLPLAKENDVAFLTPGDPLVATTHAELRIRAKRAGVESYVIHAPSIYSAVGITGLHIYKFGKSATVAYPEGNWFPTSYYDVIKENAERGLHTLLFLDIKAEKRMYMTANEAMELLLKVEDMKKGGVFTDDTLVVVLARAGSLNPTIRAGYVKDLIREDFGDPPHILIVPGKLHIVEAEYLVEIAGAPREILRVNV.

S-adenosyl-L-methionine is bound by residues Leu10, Asp87, Val90, 115-116, Leu166, Ala209, and His234; that span reads SI.

The protein belongs to the diphthine synthase family. Homodimer.

It carries out the reaction 2-[(3S)-amino-3-carboxypropyl]-L-histidyl-[translation elongation factor 2] + 3 S-adenosyl-L-methionine = diphthine-[translation elongation factor 2] + 3 S-adenosyl-L-homocysteine + 3 H(+). The protein operates within protein modification; peptidyl-diphthamide biosynthesis. In terms of biological role, S-adenosyl-L-methionine-dependent methyltransferase that catalyzes the trimethylation of the amino group of the modified target histidine residue in translation elongation factor 2 (EF-2), to form an intermediate called diphthine. The three successive methylation reactions represent the second step of diphthamide biosynthesis. The protein is Diphthine synthase of Pyrococcus horikoshii (strain ATCC 700860 / DSM 12428 / JCM 9974 / NBRC 100139 / OT-3).